The sequence spans 185 residues: Heavy metal-associated isoprenylated plant protein 11 (185 aa).

The 68-residue stretch at 39–106 (QQNTNVVFKL…ICKHVAIIAA (68 aa)) folds into the HMA domain. A compositionally biased stretch (basic and acidic residues) spans 109–158 (IREPEQNRNPVTRREPNREPEQNRSRVTRREPSREPEPNRAPLARRESRP). A disordered region spans residues 109-185 (IREPEQNRNP…GENSDGCIIM (77 aa)). Cysteine 182 bears the Cysteine methyl ester mark. Residue cysteine 182 is the site of S-farnesyl cysteine attachment. Residues 183–185 (IIM) constitute a propeptide, removed in mature form.

This sequence belongs to the HIPP family.

Probable heavy-metal-binding protein. This chain is Heavy metal-associated isoprenylated plant protein 11, found in Arabidopsis thaliana (Mouse-ear cress).